A 321-amino-acid chain; its full sequence is Dolichyl N-acetyl-alpha-D-glucosaminyl phosphate 3-beta-D-2,3-diacetamido-2,3-dideoxy-beta-D-glucuronosyltransferase (321 aa).

A run of 2 helical transmembrane segments spans residues 252–272 and 290–310; these read FGFL…FIYI and LYIA…YGFF.

The protein belongs to the glycosyltransferase 2 family.

It is found in the cell membrane. The enzyme catalyses an archaeal dolichyl N-acetyl-alpha-D-glucosaminyl phosphate + UDP-2,3-diacetamido-2,3-dideoxy-alpha-D-glucuronate = an archaeal dolichyl 3-O-(2,3-diacetamido-2,3-dideoxy- beta-D-glucuronosyl)-N-acetyl- alpha-D-glucosaminyl phosphate + UDP + H(+). Its pathway is cell surface structure biogenesis; S-layer biogenesis. It participates in protein modification; protein glycosylation. Involved in the assembly of an N-linked disaccharide that decorates the S-layer glycoprotein and flagellins. AglC catalyzes the transfer of 2,3-diacetamido-2,3-dideoxy-alpha-D-glucuronic acid (Glc-2,3-diNAcA) from uridine 5'-diphospho 2,3-diacetamido-2,3-dideoxy-alpha-D-glucuronic acid (UDP-Glc-2,3-diNAcA) to the AglK product Dol-P-GlcNAc to yield Dol-P-GlcNAc-Glc-2,3-diNAcA. AglC is specific for the monophosphate-linked Dol-P-GlcNAc. In Methanococcus voltae, this protein is Dolichyl N-acetyl-alpha-D-glucosaminyl phosphate 3-beta-D-2,3-diacetamido-2,3-dideoxy-beta-D-glucuronosyltransferase.